A 289-amino-acid polypeptide reads, in one-letter code: Serine/threonine-protein phosphatase Pgam5, mitochondrial (289 aa).

Residues 7-23 form a helical membrane-spanning segment; it reads FVCGTGAGLAVYYLQRL.

This sequence belongs to the phosphoglycerate mutase family. BPG-dependent PGAM subfamily. Interacts with Pk92B/ASK1.

The protein localises to the mitochondrion outer membrane. The enzyme catalyses O-phospho-L-seryl-[protein] + H2O = L-seryl-[protein] + phosphate. It catalyses the reaction O-phospho-L-threonyl-[protein] + H2O = L-threonyl-[protein] + phosphate. Displays phosphatase activity for serine/threonine residues, and dephosphorylates and activates Pk92B kinase. Has apparently no phosphoglycerate mutase activity. The sequence is that of Serine/threonine-protein phosphatase Pgam5, mitochondrial from Drosophila erecta (Fruit fly).